The chain runs to 316 residues: MPIEGGKTDMERIGLFSEMEYITVGDKYVSPFNRPFNEAASKNRQILPGGTKEMSSLQAGYFDSQFARIFEGEGYVNLNQVRRRYMLAESKKNLGKAFIPSSGEKKPSGLGSYYGTIGGPVPFFSAQIKPKDKYQPPGKNLYTNPGKKGTGYGYANVTIGKQLSHSSDLYDAARQSYKKESEEHHRLIKGSPFKLHLHPKDYFDTNPYFLEHHLPPLRREEKKEVSFKPFKPSSPGKKAGGMKAGAFDPYPAHSADPYVVKVEKAIPSKGERVFHPPNGPKSRPVESIMALNVKRALNVKNYKNASSTTLGKQLVF.

Residues E220–M242 are disordered. Residues F227–K237 show a composition bias toward low complexity.

It belongs to the CFAP96 family.

The protein resides in the cytoplasm. The protein localises to the cytoskeleton. Its subcellular location is the microtubule organizing center. It localises to the centrosome. The chain is Cilia-and flagella-associated protein 96 (Cfap96) from Mus musculus (Mouse).